Consider the following 161-residue polypeptide: tRNA-acetylating toxin 1 (161 aa).

Acetyl-CoA contacts are provided by L92, V94, H99, G100, G102, G104, A105, L132, and E135. Residue Y140 is part of the active site. H142 contacts acetyl-CoA.

It belongs to the acetyltransferase family. GNAT subfamily. Homodimer (in absence of antitoxin). Forms a complex with cognate antitoxin TacA1. Forms a 4:2 antitoxin:toxin complex with cognate antitoxin TacA1.

It carries out the reaction glycyl-tRNA(Gly) + acetyl-CoA = N-acetylglycyl-tRNA(Gly) + CoA + H(+). In terms of biological role, toxic component of a type II toxin-antitoxin (TA) system. Acetylates tRNA and inhibits translation, does not acetylate uncharged tRNA. Upon expression in situ acetylates only Gly-tRNA(Gly). In vitro acetylates mainly Gly and Ile/Leu. Upon induction of the toxin gene in lag phase in rich medium (but not mid-exponential phase) the lag phase is extended by several hours, locking bacteria in a non-growth state. Neutralized only by cognate antitoxin TacA1 (A8), but not by TacA2 or TacA3. Its toxic effect is neutralized by expression of peptidyl-tRNA hydrolase (pth) in lag phase. NAD-dependent protein deacylase (cobB) also play a role in detoxifying TacT targets. Expression increases persister cell formation, which is also abolished by either cognate antitoxin or Pth expression. Plays a role in persister cell formation. Its function is as follows. The TacA1-TacT1 complex binds (and probably represses) its own promoter DNA but not that of tacA3-tacT3, it does not repress the tacA3-tacT3 promoter. The polypeptide is tRNA-acetylating toxin 1 (Salmonella typhimurium (strain 14028s / SGSC 2262)).